Reading from the N-terminus, the 432-residue chain is D-amino acid dehydrogenase (432 aa).

3–17 provides a ligand contact to FAD; the sequence is VLVLGSGVVGTASAY.

This sequence belongs to the DadA oxidoreductase family. It depends on FAD as a cofactor.

The catalysed reaction is a D-alpha-amino acid + A + H2O = a 2-oxocarboxylate + AH2 + NH4(+). It participates in amino-acid degradation; D-alanine degradation; NH(3) and pyruvate from D-alanine: step 1/1. Functionally, oxidative deamination of D-amino acids. This is D-amino acid dehydrogenase from Stutzerimonas stutzeri (strain A1501) (Pseudomonas stutzeri).